The chain runs to 435 residues: Aspartate aminotransferase (435 aa).

Residues tyrosine 69 and 100-101 contribute to the pyridoxal 5'-phosphate site; that span reads SL. 139–141 is a substrate binding site; the sequence is YDR. Residues asparagine 189, tyrosine 221, and 254–256 contribute to the pyridoxal 5'-phosphate site; that span reads STS. Position 392 (arginine 392) interacts with substrate.

Belongs to the class-I pyridoxal-phosphate-dependent aminotransferase family. The cofactor is pyridoxal 5'-phosphate.

It carries out the reaction L-aspartate + 2-oxoglutarate = oxaloacetate + L-glutamate. Functionally, main aspartate aminotransferase that couples nitrogen assimilation to aspartate synthesis. Has a weak, but significant, side activity toward kynurenine (Kyn). Oxaloacetate and 2-oxoglutarate, but not pyruvate, serve as amino acceptors, while Asp, Glu and Kyn serve as the best amino donors. Essential for axenic growth and survival of M.tuberculosis in macrophages and in mice. This Mycobacterium tuberculosis (strain ATCC 25618 / H37Rv) protein is Aspartate aminotransferase.